Here is a 186-residue protein sequence, read N- to C-terminus: Protein GrpE (186 aa).

2 stretches are compositionally biased toward basic and acidic residues: residues 1–13 and 23–34; these read MSDN…EEQH and EETHQAEDAVEH. The disordered stretch occupies residues 1-34; that stretch reads MSDNKTELNEEQHNATAEGEVSEETHQAEDAVEH.

This sequence belongs to the GrpE family. Homodimer.

The protein resides in the cytoplasm. Functionally, participates actively in the response to hyperosmotic and heat shock by preventing the aggregation of stress-denatured proteins, in association with DnaK and GrpE. It is the nucleotide exchange factor for DnaK and may function as a thermosensor. Unfolded proteins bind initially to DnaJ; upon interaction with the DnaJ-bound protein, DnaK hydrolyzes its bound ATP, resulting in the formation of a stable complex. GrpE releases ADP from DnaK; ATP binding to DnaK triggers the release of the substrate protein, thus completing the reaction cycle. Several rounds of ATP-dependent interactions between DnaJ, DnaK and GrpE are required for fully efficient folding. In Hydrogenovibrio crunogenus (strain DSM 25203 / XCL-2) (Thiomicrospira crunogena), this protein is Protein GrpE.